A 177-amino-acid chain; its full sequence is Large ribosomal subunit protein uL5c (177 aa).

It belongs to the universal ribosomal protein uL5 family. As to quaternary structure, part of the 50S ribosomal subunit; contacts the 5S rRNA.

Its subcellular location is the plastid. The protein resides in the chloroplast. Functionally, binds 5S rRNA, forms part of the central protuberance of the 50S subunit. The polypeptide is Large ribosomal subunit protein uL5c (rpl5) (Cyanidioschyzon merolae (strain NIES-3377 / 10D) (Unicellular red alga)).